A 138-amino-acid chain; its full sequence is Transcription antitermination protein NusB (138 aa).

The protein belongs to the NusB family.

In terms of biological role, involved in transcription antitermination. Required for transcription of ribosomal RNA (rRNA) genes. Binds specifically to the boxA antiterminator sequence of the ribosomal RNA (rrn) operons. The sequence is that of Transcription antitermination protein NusB from Coxiella burnetii (strain Dugway 5J108-111).